A 235-amino-acid polypeptide reads, in one-letter code: Purine nucleoside phosphorylase DeoD-type (235 aa).

Position 4 (His4) interacts with a purine D-ribonucleoside. Phosphate contacts are provided by residues Gly20, Arg24, Arg43, and 87–90 (RVGT). A purine D-ribonucleoside-binding positions include 180–182 (EME) and 204–205 (SD). The active-site Proton donor is Asp205.

This sequence belongs to the PNP/UDP phosphorylase family. In terms of assembly, homohexamer; trimer of homodimers.

The catalysed reaction is a purine D-ribonucleoside + phosphate = a purine nucleobase + alpha-D-ribose 1-phosphate. It catalyses the reaction a purine 2'-deoxy-D-ribonucleoside + phosphate = a purine nucleobase + 2-deoxy-alpha-D-ribose 1-phosphate. Functionally, catalyzes the reversible phosphorolytic breakdown of the N-glycosidic bond in the beta-(deoxy)ribonucleoside molecules, with the formation of the corresponding free purine bases and pentose-1-phosphate. The sequence is that of Purine nucleoside phosphorylase DeoD-type from Oceanobacillus iheyensis (strain DSM 14371 / CIP 107618 / JCM 11309 / KCTC 3954 / HTE831).